We begin with the raw amino-acid sequence, 1409 residues long: L-2-aminoadipate reductase large subunit (1409 aa).

The region spanning 858–937 (QALSETEQTL…GFASEIDRLL (80 aa)) is the Carrier domain. The residue at position 896 (serine 896) is an O-(pantetheine 4'-phosphoryl)serine.

Belongs to the ATP-dependent AMP-binding enzyme family. In terms of assembly, heterodimer of an alpha and a beta subunit. Requires pantetheine 4'-phosphate as cofactor.

The enzyme catalyses (S)-2-amino-6-oxohexanoate + NADP(+) + H2O = L-2-aminoadipate + NADPH + 2 H(+). The catalysed reaction is (S)-2-amino-6-oxohexanoate + NAD(+) + H2O = L-2-aminoadipate + NADH + 2 H(+). It catalyses the reaction (S)-2-amino-6-oxohexanoate + AMP + diphosphate + NADP(+) = L-2-aminoadipate + ATP + NADPH + H(+). The protein operates within amino-acid biosynthesis; L-lysine biosynthesis via AAA pathway; L-lysine from L-alpha-aminoadipate (fungal route): step 1/3. Catalyzes the activation of alpha-aminoadipate by ATP-dependent adenylation and the reduction of activated alpha-aminoadipate by NADPH. The activated alpha-aminoadipate is bound to the phosphopantheinyl group of the enzyme itself before it is reduced to (S)-2-amino-6-oxohexanoate. This Penicillium chrysogenum (Penicillium notatum) protein is L-2-aminoadipate reductase large subunit (lys2).